A 623-amino-acid chain; its full sequence is Prothrombin (623 aa).

The first 24 residues, 1–24 (MAHVGGLWLHGCLALAVLVSLVHS), serve as a signal peptide directing secretion. Positions 25–43 (QHVFMAPQQALSLLQRARR) are excised as a propeptide. Residues 44 to 90 (ANSGFFEEMRKGNLERECVEEQCSREEAYEALESPSETDAFWAKYTA) enclose the Gla domain. Glu-50, Glu-51, Glu-58, Glu-60, Glu-63, Glu-64, Glu-69, Glu-70, Glu-73, and Glu-76 each carry 4-carboxyglutamate. A disulfide bridge links Cys-61 with Cys-66. Disulfide bonds link Cys-91/Cys-104, Cys-109/Cys-187, Cys-130/Cys-170, Cys-158/Cys-182, Cys-214/Cys-292, Cys-235/Cys-275, Cys-263/Cys-287, Cys-337/Cys-483, Cys-392/Cys-408, Cys-537/Cys-551, and Cys-565/Cys-595. Kringle domains are found at residues 108-187 (NCAE…IPVC) and 213-292 (TCVP…LDYC). N-linked (GlcNAc...) asparagine glycosylation is found at Asn-120 and Asn-144. One can recognise a Peptidase S1 domain in the interval 365–619 (IVEGSDAEIG…LKKWMQKVID (255 aa)). His-407 acts as the Charge relay system in catalysis. N-linked (GlcNAc...) asparagine glycosylation occurs at Asn-417. The active-site Charge relay system is Asp-463. Residues 552–574 (AGYKPDEGKRGDACEGDSGGPFV) are high affinity receptor-binding region which is also known as the TP508 peptide. Ser-569 serves as the catalytic Charge relay system.

This sequence belongs to the peptidase S1 family. In terms of assembly, heterodimer (named alpha-thrombin) of a light and a heavy chain; disulfide-linked. Forms a heterodimer with SERPINA5. In plasma, interacts (via N-terminus) with alpha-1-microglobulin; this interaction does not prevent the activation of prothrombin to thrombin. Post-translationally, the gamma-carboxyglutamyl residues, which bind calcium ions, result from the carboxylation of glutamyl residues by a microsomal enzyme, the vitamin K-dependent carboxylase. The modified residues are necessary for the calcium-dependent interaction with a negatively charged phospholipid surface, which is essential for the conversion of prothrombin to thrombin. In terms of processing, in the penultimate step of the coagulation cascade, prothrombin is converted to thrombin by the prothrombinase complex composed of factor Xa (F10), cofactor Va (F5), and phospholipids. This activation requires factor Xa-catalyzed sequential cleavage at 2 sites, Arg-315 and Arg-364, along 2 possible pathways. In the first pathway, the first cleavage occurs at Arg-315, leading to the formation of the inactive intermediate prethrombin-2. This pathway preferentially occurs on platelets and in the absence of cofactor Va. In the second pathway, the first cleavage occurs at Arg-364, which separates protease domain into 2 chains that remain connected through a disulfide bond and generates the active intermediate meizothrombin. The presence of cofactor Va directs activation along the meizothrombin pathway and greatly accelerates the rate of cleavage at Arg-364, but has a smaller effect on the cleavage of meizothrombin at Arg-315. Meizothrombin accumulates as an intermediate when prothrombinase is assembled on the membrane of red blood cells.

It catalyses the reaction Selective cleavage of Arg-|-Gly bonds in fibrinogen to form fibrin and release fibrinopeptides A and B.. Its activity is regulated as follows. Activity is promoted in the presence of negatively charged surfaces, such as polyphosphate and dextran sulfate. Inhibited by SERPINA5. Functionally, thrombin, which cleaves bonds after Arg and Lys, converts fibrinogen to fibrin and activates factors V, VII, VIII, XIII, and, in complex with thrombomodulin, protein C. Functions in blood homeostasis, inflammation and wound healing. Activates coagulation factor XI (F11); activation is promoted by the contact with negatively charged surfaces. Triggers the production of pro-inflammatory cytokines, such as MCP-1/CCL2 and IL8/CXCL8, in endothelial cells. This chain is Prothrombin (F2), found in Sus scrofa (Pig).